Consider the following 611-residue polypeptide: Sodium-coupled monocarboxylate transporter 1 (611 aa).

Residues 1–9 (MDASRDIGS) lie on the Extracellular side of the membrane. The helical transmembrane segment at 10-30 (FVVWDYVVFAGMLLISAAIGI) threads the bilayer. Residues 31–51 (YYAFAGGGQQTSKDFLMGGRS) lie on the Cytoplasmic side of the membrane. A helical membrane pass occupies residues 52 to 72 (MSAVPVALSLTASFMSAVTVL). At 73-86 (GTPAEVYRFGAIFS) the chain is on the extracellular side. A helical membrane pass occupies residues 87-107 (IFVITYFFVVVISAEVFLPVF). Over 108–132 (YRLGITSTYEYLELRFNRCIRLCGT) the chain is Cytoplasmic. A helical membrane pass occupies residues 133–153 (ILFIVQTILYTGIVIYAPALA). The Extracellular portion of the chain corresponds to 154–161 (LNQVTGFD). The helical transmembrane segment at 162-182 (LWGAVVATGVVCTFYCTLGGL) threads the bilayer. Over 183 to 184 (KA) the chain is Cytoplasmic. Residues 185-205 (VVWTDVFQVGIMVAGFASVII) traverse the membrane as a helical segment. The Extracellular portion of the chain corresponds to 206–239 (QASITQHGINKILSDAFNGGRLNFWNFDPNPLQR). Residues 240-260 (HTFWTIVIGGTFTWTTIYGVN) traverse the membrane as a helical segment. At 261 to 279 (QSQVQRYISCKSRLHAKLS) the chain is on the cytoplasmic side. Residues 280–300 (LYVNLVGLWVILTCSIFCGLA) traverse the membrane as a helical segment. Residues 301-336 (LYSRYRECDPWTSKKVSAIDQLMPYLVLDILKNYPG) are Extracellular-facing. Residues 337 to 359 (VPGLFVACAYSGTLSTVSSSINA) traverse the membrane as a helical segment. The Cytoplasmic portion of the chain corresponds to 360–389 (LAAVTVEDLIKPRFKSLSEKSLSWISQGMS). Residues 390 to 410 (VLYGALCIGMAALASLMGALL) traverse the membrane as a helical segment. Residues 411-415 (QAALS) are Extracellular-facing. The chain crosses the membrane as a helical span at residues 416–436 (IFGMVGGPLLGLFSLGILVPF). Residues 437–439 (ANS) are Cytoplasmic-facing. A helical membrane pass occupies residues 440-460 (IGALTGLLAGFAISLWVGIGA). Over 461 to 518 (QLYPPLPERTLPLPLETYGCNITHNGSDWMSTTEMPFSTSAFQIHNAERTPLMDNWYS) the chain is Extracellular. Residue asparagine 485 is glycosylated (N-linked (GlcNAc...) asparagine). The chain crosses the membrane as a helical span at residues 519 to 539 (LSYLYFSTIGTLTTLFVGILI). Over 540 to 611 (SLSTGGRKQN…HSGKINGTRL (72 aa)) the chain is Cytoplasmic. The PDZ-binding motif lies at 609–611 (TRL).

Belongs to the sodium:solute symporter (SSF) (TC 2.A.21) family. Interacts (via PDZ-binding motif) with PDZK1 (via PDZ domains 1 and 3); interaction increases nicotinate transport activity of SLC5A8. As to expression, expressed in brain, colon, kidney and in the ileum and jejunum of small intestine. In the kidney, expression occurred in the proximal tubule and the loop of Henle, being restricted to tubular epithelial cells in both the cortex and the medulla. In the colon, predominantly expressed in the distal half of the large bowel and in the most terminal ileum. Localized selectively in the luminal surface of crypts in the large intestine and to the brush border in the middle parts of crypts in the cecum. In the brain, expression was seen throughout, exclusively in neurons, including the cortex, hippocampus, cerebellum and pituitary gland (at protein level). Expression is reduced in oligodendrogliomas.

It localises to the apical cell membrane. The enzyme catalyses (S)-lactate(out) + 2 Na(+)(out) = (S)-lactate(in) + 2 Na(+)(in). It catalyses the reaction propanoate(out) + 2 Na(+)(out) = propanoate(in) + 2 Na(+)(in). It carries out the reaction pyruvate(out) + 2 Na(+)(out) = pyruvate(in) + 2 Na(+)(in). The catalysed reaction is acetate(out) + 2 Na(+)(out) = acetate(in) + 2 Na(+)(in). The enzyme catalyses butanoate(out) + 2 Na(+)(out) = butanoate(in) + 2 Na(+)(in). It catalyses the reaction nicotinate(out) + 2 Na(+)(out) = nicotinate(in) + 2 Na(+)(in). It carries out the reaction (R)-3-hydroxybutanoate(out) + 2 Na(+)(out) = (R)-3-hydroxybutanoate(in) + 2 Na(+)(in). The catalysed reaction is acetoacetate(out) + 2 Na(+)(out) = acetoacetate(in) + 2 Na(+)(in). The enzyme catalyses 4-methyl-2-oxopentanoate(out) + 2 Na(+)(out) = 4-methyl-2-oxopentanoate(in) + 2 Na(+)(in). It catalyses the reaction 5-oxo-L-proline(out) + 2 Na(+)(out) = 5-oxo-L-proline(in) + 2 Na(+)(in). It carries out the reaction iodide(out) = iodide(in). The catalysed reaction is chloride(in) = chloride(out). The enzyme catalyses nitrate(in) = nitrate(out). It catalyses the reaction bromide(in) = bromide(out). Its activity is regulated as follows. Transport of D-lactate and pyruvate stimulated by alpha-cyano-4-hydroxycinnamic acid, but inhibited by the short-chain fatty acids acetate, propionate and butyrate. Acts as an electrogenic sodium (Na(+)) and chloride (Cl-)-dependent sodium-coupled solute transporter, including transport of monocarboxylates (short-chain fatty acids including L-lactate, D-lactate, pyruvate, acetate, propionate, valerate and butyrate), mocarboxylate drugs (nicotinate, benzoate, salicylate and 5-aminosalicylate) and ketone bodies (beta-D-hydroxybutyrate, acetoacetate and alpha-ketoisocaproate), with a Na(+):substrate stoichiometry of between 4:1 and 2:1. Catalyzes passive carrier mediated diffusion of iodide. Mediates iodide transport from the thyrocyte into the colloid lumen through the apical membrane. May be responsible for the absorption of D-lactate and monocarboxylate drugs from the intestinal tract. May play a critical role in the entry of L-lactate and ketone bodies into neurons by a process driven by an electrochemical Na(+) gradient and hence contribute to the maintenance of the energy status and function of neurons. Mediates sodium-coupled electrogenic transport of pyroglutamate (5-oxo-L-proline). Can mediate the transport of chloride, bromide, iodide and nitrate ions when external concentration of sodium ions is reduced. This is Sodium-coupled monocarboxylate transporter 1 from Mus musculus (Mouse).